We begin with the raw amino-acid sequence, 126 residues long: Large ribosomal subunit protein bL19 (126 aa).

It belongs to the bacterial ribosomal protein bL19 family.

This protein is located at the 30S-50S ribosomal subunit interface and may play a role in the structure and function of the aminoacyl-tRNA binding site. This chain is Large ribosomal subunit protein bL19, found in Thiobacillus denitrificans (strain ATCC 25259 / T1).